The primary structure comprises 409 residues: Serine/threonine transporter SstT (409 aa).

Transmembrane regions (helical) follow at residues 14–34 (GNLIIQILIGITIGGILGFIA), 57–77 (GALKAVAPILVFILVASSIII), 89–109 (IIILYLVGTFLASLSAVVVSF), 149–169 (AISSGNYIGILTWAIGTGIAL), 190–210 (IVKFIIKLAPFGIFGLVATSV), 224–244 (LLLVLVGTMLFVAFVVNAAIV), 296–316 (ISIPLGATINMAGAAVTIAVL), 338–358 (IIAAIGACGASGVAGGSLMLI), and 365–385 (FGISNDIAMQVVAVGFIIGVV).

The protein belongs to the dicarboxylate/amino acid:cation symporter (DAACS) (TC 2.A.23) family.

It localises to the cell inner membrane. The catalysed reaction is L-serine(in) + Na(+)(in) = L-serine(out) + Na(+)(out). The enzyme catalyses L-threonine(in) + Na(+)(in) = L-threonine(out) + Na(+)(out). In terms of biological role, involved in the import of serine and threonine into the cell, with the concomitant import of sodium (symport system). The chain is Serine/threonine transporter SstT from Campylobacter fetus subsp. fetus (strain 82-40).